Reading from the N-terminus, the 166-residue chain is Deoxyuridine 5'-triphosphate nucleotidohydrolase (166 aa).

A disordered region spans residues 1-24; that stretch reads MACVNEPSPKLQKLDRNGIHGDSS. A Mg(2+)-binding site is contributed by glutamate 138.

This sequence belongs to the dUTPase family. As to quaternary structure, homotrimer. Mg(2+) serves as cofactor.

The enzyme catalyses dUTP + H2O = dUMP + diphosphate + H(+). The protein operates within pyrimidine metabolism; dUMP biosynthesis; dUMP from dCTP (dUTP route): step 2/2. In terms of biological role, this enzyme is involved in nucleotide metabolism: it produces dUMP, the immediate precursor of thymidine nucleotides and it decreases the intracellular concentration of dUTP, preventing uracil incorporation into DNA. In Arabidopsis thaliana (Mouse-ear cress), this protein is Deoxyuridine 5'-triphosphate nucleotidohydrolase (DUT).